A 412-amino-acid chain; its full sequence is Dihydrolipoyllysine-residue acetyltransferase component of pyruvate dehydrogenase complex (412 aa).

A Lipoyl-binding domain is found at 2–78 (PIKILMPALS…PVNSLIAVLS (77 aa)). Residue Lys-43 is modified to N6-lipoyllysine. A Peripheral subunit-binding (PSBD) domain is found at 132–169 (FASPLAKRLAKMRNIRFESVKGSGPHGRIVKQDILSYT). The active site involves His-385.

It belongs to the 2-oxoacid dehydrogenase family. Forms a 24-polypeptide structural core with octahedral symmetry. (R)-lipoate is required as a cofactor.

The catalysed reaction is N(6)-[(R)-dihydrolipoyl]-L-lysyl-[protein] + acetyl-CoA = N(6)-[(R)-S(8)-acetyldihydrolipoyl]-L-lysyl-[protein] + CoA. Functionally, the pyruvate dehydrogenase complex catalyzes the overall conversion of pyruvate to acetyl-CoA and CO(2). It contains multiple copies of three enzymatic components: pyruvate dehydrogenase (E1), dihydrolipoamide acetyltransferase (E2) and lipoamide dehydrogenase (E3). The sequence is that of Dihydrolipoyllysine-residue acetyltransferase component of pyruvate dehydrogenase complex (pdhC) from Rickettsia conorii (strain ATCC VR-613 / Malish 7).